The following is a 451-amino-acid chain: Tubulin alpha-2 chain (451 aa).

GTP is bound by residues glutamine 12, aspartate 73, serine 142, glycine 146, threonine 147, threonine 181, asparagine 208, and asparagine 230. Aspartate 73 is a binding site for Mg(2+). Residue glutamate 256 is part of the active site.

It belongs to the tubulin family. Dimer of alpha and beta chains. A typical microtubule is a hollow water-filled tube with an outer diameter of 25 nm and an inner diameter of 15 nM. Alpha-beta heterodimers associate head-to-tail to form protofilaments running lengthwise along the microtubule wall with the beta-tubulin subunit facing the microtubule plus end conferring a structural polarity. Microtubules usually have 13 protofilaments but different protofilament numbers can be found in some organisms and specialized cells. Mg(2+) is required as a cofactor.

The protein resides in the cytoplasm. The protein localises to the cytoskeleton. It carries out the reaction GTP + H2O = GDP + phosphate + H(+). Functionally, tubulin is the major constituent of microtubules, a cylinder consisting of laterally associated linear protofilaments composed of alpha- and beta-tubulin heterodimers. Microtubules grow by the addition of GTP-tubulin dimers to the microtubule end, where a stabilizing cap forms. Below the cap, tubulin dimers are in GDP-bound state, owing to GTPase activity of alpha-tubulin. The sequence is that of Tubulin alpha-2 chain (tubB) from Emericella nidulans (strain FGSC A4 / ATCC 38163 / CBS 112.46 / NRRL 194 / M139) (Aspergillus nidulans).